Reading from the N-terminus, the 135-residue chain is Ribosome-binding factor A (135 aa).

Belongs to the RbfA family. Monomer. Binds 30S ribosomal subunits, but not 50S ribosomal subunits or 70S ribosomes.

It is found in the cytoplasm. Functionally, one of several proteins that assist in the late maturation steps of the functional core of the 30S ribosomal subunit. Associates with free 30S ribosomal subunits (but not with 30S subunits that are part of 70S ribosomes or polysomes). Required for efficient processing of 16S rRNA. May interact with the 5'-terminal helix region of 16S rRNA. This Bartonella quintana (strain Toulouse) (Rochalimaea quintana) protein is Ribosome-binding factor A.